Here is an 841-residue protein sequence, read N- to C-terminus: Auxin response factor 24 (841 aa).

The disordered stretch occupies residues 109-140 (LPEKQQDGNGSGNGNVSKDKVEEEEVVPPAAT). The TF-B3 DNA-binding region spans 148 to 250 (FCKTLTASDT…ELRVGVRRAM (103 aa)). Disordered regions lie at residues 366–397 (PRPD…KRAR), 663–715 (QDAL…SRSC), and 804–841 (GALN…SENC). Basic and acidic residues predominate over residues 684–695 (AQHDSAREKHQS). Polar residues-rich tracts occupy residues 701–713 (KNIQ…GSSR) and 830–841 (GLSTPSLNSENC). The region spanning 713-797 (RSCKKVHKQG…HKIFIYTREE (85 aa)) is the PB1 domain.

This sequence belongs to the ARF family. In terms of assembly, homodimers and heterodimers. As to expression, expressed in roots, culms, leaves and young panicles.

The protein localises to the nucleus. Auxin response factors (ARFs) are transcriptional factors that bind specifically to the DNA sequence 5'-TGTCTC-3' found in the auxin-responsive promoter elements (AuxREs). The protein is Auxin response factor 24 (ARF24) of Oryza sativa subsp. japonica (Rice).